The following is a 247-amino-acid chain: Cell division protein ZapD (247 aa).

This sequence belongs to the ZapD family. As to quaternary structure, interacts with FtsZ.

It is found in the cytoplasm. In terms of biological role, cell division factor that enhances FtsZ-ring assembly. Directly interacts with FtsZ and promotes bundling of FtsZ protofilaments, with a reduction in FtsZ GTPase activity. The protein is Cell division protein ZapD of Shigella flexneri.